We begin with the raw amino-acid sequence, 374 residues long: Putative glutamate--cysteine ligase 2 (374 aa).

This sequence belongs to the glutamate--cysteine ligase type 2 family. YbdK subfamily.

The catalysed reaction is L-cysteine + L-glutamate + ATP = gamma-L-glutamyl-L-cysteine + ADP + phosphate + H(+). ATP-dependent carboxylate-amine ligase which exhibits weak glutamate--cysteine ligase activity. The chain is Putative glutamate--cysteine ligase 2 from Laribacter hongkongensis (strain HLHK9).